The following is a 191-amino-acid chain: Prostaglandin-H2 D-isomerase (191 aa).

An N-terminal signal peptide occupies residues 1-24; sequence MGALCTLWLGLVLLGVLGALQTSA. Pyrrolidone carboxylic acid is present on Q25. N51 is a glycosylation site (N-linked (GlcNAc...) asparagine). C65 acts as the Nucleophile in catalysis. The N-linked (GlcNAc...) asparagine glycan is linked to N78. An intrachain disulfide couples C89 to C186.

The protein belongs to the calycin superfamily. Lipocalin family. Monomer. N- and O-glycosylated. Both N-glycosylation recognition sites are almost quantitatively occupied by N-glycans of the biantennary complex type, with a considerable proportion of structures bearing a bisecting GlcNAc. N-glycan at Asn-78: dHex1Hex5HexNAc4. Agalacto structure as well as sialylated and nonsialylated oligosaccharides bearing alpha2-3- and/or alpha2-6-linked NeuNAc are present.

It localises to the rough endoplasmic reticulum. The protein resides in the nucleus membrane. It is found in the golgi apparatus. Its subcellular location is the cytoplasm. The protein localises to the perinuclear region. It localises to the secreted. The enzyme catalyses prostaglandin H2 = prostaglandin D2. Functionally, catalyzes the conversion of PGH2 to PGD2, a prostaglandin involved in smooth muscle contraction/relaxation and a potent inhibitor of platelet aggregation. Involved in a variety of CNS functions, such as sedation, NREM sleep and PGE2-induced allodynia, and may have an anti-apoptotic role in oligodendrocytes. Binds small non-substrate lipophilic molecules, including biliverdin, bilirubin, retinal, retinoic acid and thyroid hormone, and may act as a scavenger for harmful hydrophobic molecules and as a secretory retinoid and thyroid hormone transporter. Possibly involved in development and maintenance of the blood-brain, blood-retina, blood-aqueous humor and blood-testis barrier. It is likely to play important roles in both maturation and maintenance of the central nervous system and male reproductive system. Involved in PLA2G3-dependent maturation of mast cells. PLA2G3 is secreted by immature mast cells and acts on nearby fibroblasts upstream to PTDGS to synthesize PGD2, which in turn promotes mast cell maturation and degranulation via PTGDR. The chain is Prostaglandin-H2 D-isomerase (PTGDS) from Canis lupus familiaris (Dog).